Reading from the N-terminus, the 343-residue chain is Transmembrane protein 82 (343 aa).

Transmembrane regions (helical) follow at residues 30–50 (GLIG…YFFV), 77–97 (LAGL…LVVL), 121–141 (LQLY…GLSF), 145–167 (GAPH…GLGA), 203–223 (LLGR…VALI), 233–252 (AMRF…IYMQ), 263–283 (SQVQ…LTVG), and 285–305 (WLDL…LVGV). Residues 320 to 333 (QRPPVSTPSQPLPS) show a composition bias toward pro residues. A disordered region spans residues 320 to 343 (QRPPVSTPSQPLPSAPQSQSSAPS). A compositionally biased stretch (low complexity) spans 334–343 (APQSQSSAPS).

The protein belongs to the TMEM82 family.

The protein localises to the membrane. The protein is Transmembrane protein 82 (TMEM82) of Homo sapiens (Human).